We begin with the raw amino-acid sequence, 290 residues long: uncharacterized protein (290 aa).

Residues 153–178 (EMVPITTSSTTPRSKGDEATSTGAFP) are disordered. Polar residues predominate over residues 157-178 (ITTSSTTPRSKGDEATSTGAFP). A helical membrane pass occupies residues 202 to 222 (LIAVTLLLGGAAIIVFVIFEV). Residues 246 to 276 (KEEDQKPGTTESQLDSQPEKVKHNVPNSSDS) form a disordered region. Polar residues predominate over residues 252-261 (PGTTESQLDS).

The protein resides in the membrane. This is an uncharacterized protein from Mus musculus (Mouse).